We begin with the raw amino-acid sequence, 662 residues long: Protein-arginine deiminase type-1 (662 aa).

Residues N153, D155, D157, D164, D175, D178, Q350, E352, K363, D370, S371, N374, F408, and L411 each contribute to the Ca(2+) site. C644 serves as the catalytic Nucleophile.

Belongs to the protein arginine deiminase family. In terms of assembly, monomer. Requires Ca(2+) as cofactor. Expressed only in the epidermis and uterus.

The protein localises to the cytoplasm. It carries out the reaction L-arginyl-[protein] + H2O = L-citrullyl-[protein] + NH4(+). Its function is as follows. Catalyzes the deimination of arginine residues of proteins. The protein is Protein-arginine deiminase type-1 (Padi1) of Mus musculus (Mouse).